The following is a 180-amino-acid chain: Adenine phosphoribosyltransferase (180 aa).

Alanine 2 carries the post-translational modification N-acetylalanine. 2 positions are modified to phosphoserine: serine 15 and serine 30. Tyrosine 60 bears the Phosphotyrosine mark. The residue at position 66 (serine 66) is a Phosphoserine. Threonine 135 is modified (phosphothreonine).

Belongs to the purine/pyrimidine phosphoribosyltransferase family. In terms of assembly, homodimer.

It localises to the cytoplasm. The enzyme catalyses AMP + diphosphate = 5-phospho-alpha-D-ribose 1-diphosphate + adenine. It participates in purine metabolism; AMP biosynthesis via salvage pathway; AMP from adenine: step 1/1. In terms of biological role, catalyzes a salvage reaction resulting in the formation of AMP, that is energically less costly than de novo synthesis. The polypeptide is Adenine phosphoribosyltransferase (Bos taurus (Bovine)).